Consider the following 957-residue polypeptide: Glycine dehydrogenase (decarboxylating) (957 aa).

At Lys-708 the chain carries N6-(pyridoxal phosphate)lysine.

The protein belongs to the GcvP family. In terms of assembly, the glycine cleavage system is composed of four proteins: P, T, L and H. The cofactor is pyridoxal 5'-phosphate.

It carries out the reaction N(6)-[(R)-lipoyl]-L-lysyl-[glycine-cleavage complex H protein] + glycine + H(+) = N(6)-[(R)-S(8)-aminomethyldihydrolipoyl]-L-lysyl-[glycine-cleavage complex H protein] + CO2. Its function is as follows. The glycine cleavage system catalyzes the degradation of glycine. The P protein binds the alpha-amino group of glycine through its pyridoxal phosphate cofactor; CO(2) is released and the remaining methylamine moiety is then transferred to the lipoamide cofactor of the H protein. In Escherichia coli O1:K1 / APEC, this protein is Glycine dehydrogenase (decarboxylating).